Reading from the N-terminus, the 178-residue chain is Alkyl hydroperoxide reductase AhpD (178 aa).

The active-site Proton donor is Cys130. A disulfide bond links Cys130 and Cys133. Cys133 (cysteine sulfenic acid (-SOH) intermediate) is an active-site residue.

It belongs to the AhpD family. Homotrimer.

The enzyme catalyses N(6)-[(R)-dihydrolipoyl]-L-lysyl-[lipoyl-carrier protein] + a hydroperoxide = N(6)-[(R)-lipoyl]-L-lysyl-[lipoyl-carrier protein] + an alcohol + H2O. Functionally, antioxidant protein with alkyl hydroperoxidase activity. Required for the reduction of the AhpC active site cysteine residues and for the regeneration of the AhpC enzyme activity. This chain is Alkyl hydroperoxide reductase AhpD, found in Mycolicibacterium paratuberculosis (strain ATCC BAA-968 / K-10) (Mycobacterium paratuberculosis).